The sequence spans 210 residues: ATP-dependent Clp protease proteolytic subunit (210 aa).

Ser-106 functions as the Nucleophile in the catalytic mechanism. His-131 is a catalytic residue.

Belongs to the peptidase S14 family. As to quaternary structure, fourteen ClpP subunits assemble into 2 heptameric rings which stack back to back to give a disk-like structure with a central cavity, resembling the structure of eukaryotic proteasomes.

Its subcellular location is the cytoplasm. The catalysed reaction is Hydrolysis of proteins to small peptides in the presence of ATP and magnesium. alpha-casein is the usual test substrate. In the absence of ATP, only oligopeptides shorter than five residues are hydrolyzed (such as succinyl-Leu-Tyr-|-NHMec, and Leu-Tyr-Leu-|-Tyr-Trp, in which cleavage of the -Tyr-|-Leu- and -Tyr-|-Trp bonds also occurs).. Its function is as follows. Cleaves peptides in various proteins in a process that requires ATP hydrolysis. Has a chymotrypsin-like activity. Plays a major role in the degradation of misfolded proteins. This Bartonella quintana (strain Toulouse) (Rochalimaea quintana) protein is ATP-dependent Clp protease proteolytic subunit.